The chain runs to 529 residues: MAMGNPGLWTHFSRSPRELRIPNDLELPNGLLVVCGLPGLLLLFFVTAILLYPFRNKSDLPLINPGKGRIGILRGYRARKTFAAELPRLVTEGLSKASAFRIAAPDGVNIVLAPRYAHEIAEHPDLNPGPIAGDEFNCHIDGFEVFAQLGTSDVIAESVRTRLTRQLTKLTPLLTTETPLLLQSQWKDAPTWVEVSPHETALFILSRLSSLVFVGDDLGRNPDWVHILTSYNTEAFAAAQELNLWPQILRPLVARLKPSCRQLRRYIRDARALLVPVIEQRRHAQSHGDRREYNDAIEWLDQTSRSAGQPYDPLLSQMLLAIGSFHTSSDLLGQVLLDLCSRRDWEVLARELRKEIISSLQGAGWDKIALNNLKLMDSVLKESQRLKPASTVTMGRYASREIRLSDGTAIPKGSTVFIANVAMRDPKIYPEPDAFIPDRFTTRREKGDSSAYLVSASPEHIGFGLGRHACPGRFFAANEVKIVLSHMLLKYDIKFPDNGAAAPSTSGIFLETNPDARICVRRRKEEIVI.

A helical membrane pass occupies residues 31 to 51 (LLVVCGLPGLLLLFFVTAILL). Residue cysteine 470 participates in heme binding.

It belongs to the cytochrome P450 family. Heme serves as cofactor.

It localises to the membrane. The protein operates within secondary metabolite biosynthesis; terpenoid biosynthesis. Functionally, cytochrome P450 monooxygenase; part of the gene cluster that mediates the biosynthesis of calidodehydroaustin, a fungal meroterpenoid. The first step of the pathway is the synthesis of 3,5-dimethylorsellinic acid by the polyketide synthase ausA. 3,5-dimethylorsellinic acid is then prenylated by the polyprenyl transferase ausN. Further epoxidation by the FAD-dependent monooxygenase ausM and cyclization by the probable terpene cyclase ausL lead to the formation of protoaustinoid A. Protoaustinoid A is then oxidized to spiro-lactone preaustinoid A3 by the combined action of the FAD-binding monooxygenases ausB and ausC, and the dioxygenase ausE. Acid-catalyzed keto-rearrangement and ring contraction of the tetraketide portion of preaustinoid A3 by ausJ lead to the formation of preaustinoid A4. The aldo-keto reductase ausK, with the help of ausH, is involved in the next step by transforming preaustinoid A4 into isoaustinone which is in turn hydroxylated by the P450 monooxygenase ausI to form austinolide. The cytochrome P450 monooxygenase ausG modifies austinolide to austinol. Austinol is further acetylated to austin by the O-acetyltransferase ausP, which spontaneously changes to dehydroaustin. The cytochrome P450 monooxygenase ausR then converts dehydroaustin is into 7-dehydrodehydroaustin. The hydroxylation catalyzed by ausR permits the O-acetyltransferase ausQ to add an additional acetyl group to the molecule, leading to the formation of acetoxydehydroaustin. The short chain dehydrogenase ausT catalyzes the reduction of the double bond present between carbon atoms 1 and 2 to convert 7-dehydrodehydroaustin into 1,2-dihydro-7-hydroxydehydroaustin. AusQ catalyzes not only an acetylation reaction but also the addition of the PKS ausV diketide product to 1,2-dihydro-7-hydroxydehydroaustin, forming precalidodehydroaustin. Finally, the iron/alpha-ketoglutarate-dependent dioxygenase converts precalidodehydroaustin into calidodehydroaustin. The sequence is that of Cytochrome P450 monooxygenase ausG from Aspergillus calidoustus.